The primary structure comprises 684 residues: Protein EXECUTER 1, chloroplastic (684 aa).

A compositionally biased stretch (polar residues) spans 1–31; sequence MPSLSTPPSQNLAFSPAASATSSRLTPSSKR. Residues 1–46 constitute a chloroplast transit peptide; that stretch reads MPSLSTPPSQNLAFSPAASATSSRLTPSSKRSFYPHRLPDPTALCR. The segment at 1 to 66 is disordered; sequence MPSLSTPPSQ…SSSSSDDNPR (66 aa). Over residues 48–61 the composition is skewed to low complexity; that stretch reads SSSSGSNSSSSSSS. The UVR domain maps to 127–162; sequence DRLLSVLKSQLNRAIKREDYEDAARLKVAIAATATN. The tract at residues 278 to 318 is disordered; it reads TLTPGRFLTSPGRKEDTGNLAVESSEDEESDNSDDDSDLLE. A compositionally biased stretch (acidic residues) spans 301–318; that stretch reads SSEDEESDNSDDDSDLLE.

Its subcellular location is the plastid. It is found in the chloroplast. Its function is as follows. Together with EX2, enables higher plants to perceive singlet oxygen as a stress signal in plastid that activates a genetically determined nuclear stress response program which triggers a programmed cell death (PCD). This transfer of singlet oxygen-induced stress-related signals from the plastid to the nucleus that triggers genetically controlled PCD pathway is unique to photosynthetic eukaryotes and operates under mild stress conditions, impeding photosystem II (PSII) without causing photooxidative damage of the plant. This Arabidopsis thaliana (Mouse-ear cress) protein is Protein EXECUTER 1, chloroplastic.